The primary structure comprises 150 residues: Deoxyuridine 5'-triphosphate nucleotidohydrolase (150 aa).

Substrate is bound by residues 69–71 (RSG), Asn82, and 86–88 (LID).

Belongs to the dUTPase family. Requires Mg(2+) as cofactor.

It carries out the reaction dUTP + H2O = dUMP + diphosphate + H(+). It participates in pyrimidine metabolism; dUMP biosynthesis; dUMP from dCTP (dUTP route): step 2/2. Functionally, this enzyme is involved in nucleotide metabolism: it produces dUMP, the immediate precursor of thymidine nucleotides and it decreases the intracellular concentration of dUTP so that uracil cannot be incorporated into DNA. The sequence is that of Deoxyuridine 5'-triphosphate nucleotidohydrolase from Chromobacterium violaceum (strain ATCC 12472 / DSM 30191 / JCM 1249 / CCUG 213 / NBRC 12614 / NCIMB 9131 / NCTC 9757 / MK).